A 215-amino-acid polypeptide reads, in one-letter code: Large ribosomal subunit protein uL3 (215 aa).

Positions 136 to 155 (GVSISHRSHGSTGQRQDPGK) are disordered. The residue at position 151 (Q151) is an N5-methylglutamine.

It belongs to the universal ribosomal protein uL3 family. In terms of assembly, part of the 50S ribosomal subunit. Forms a cluster with proteins L14 and L19. Methylated by PrmB.

Its function is as follows. One of the primary rRNA binding proteins, it binds directly near the 3'-end of the 23S rRNA, where it nucleates assembly of the 50S subunit. In Rickettsia africae (strain ESF-5), this protein is Large ribosomal subunit protein uL3.